A 230-amino-acid polypeptide reads, in one-letter code: MKQLEELLSTSFDIQFNDLTLLETAFTHTSYANEHRLLNVSHNERLEFLGDAVLQLIISEYLFAKYPKKTEGDMSKLRSMIVREESLAGFSRFCSFDAYIKLGKGEEKSGGRRRDTILGDLFEAFLGALLLDKGIDAVRRFLKQVMIPQVEKGNFERVKDYKTCLQEFLQTKGDVAIDYQVISEKGPAHAKQFEVSIVVNGAVLSKGLGKSKKLAEQDAAKNALAQLSEV.

The region spanning 1–134 is the RNase III domain; that stretch reads MKQLEELLST…FLGALLLDKG (134 aa). Residue E47 participates in Mg(2+) binding. D51 is a catalytic residue. 2 residues coordinate Mg(2+): D120 and E123. The active site involves E123. Residues 160-229 form the DRBM domain; the sequence is DYKTCLQEFL…AKNALAQLSE (70 aa).

This sequence belongs to the ribonuclease III family. In terms of assembly, homodimer. Mg(2+) serves as cofactor.

The protein localises to the cytoplasm. It catalyses the reaction Endonucleolytic cleavage to 5'-phosphomonoester.. Functionally, digests double-stranded RNA. Involved in the processing of primary rRNA transcript to yield the immediate precursors to the large and small rRNAs (23S and 16S). Processes some mRNAs, and tRNAs when they are encoded in the rRNA operon. Processes pre-crRNA and tracrRNA of type II CRISPR loci if present in the organism. The protein is Ribonuclease 3 of Streptococcus pyogenes serotype M3 (strain SSI-1).